We begin with the raw amino-acid sequence, 367 residues long: Leu/Ile/Val-binding protein (367 aa).

Positions 1–23 are cleaved as a signal peptide; it reads MNIKGKALLAGCIALAFSNMALA. Cysteines 76 and 101 form a disulfide.

It belongs to the leucine-binding protein family.

The protein resides in the periplasm. Its function is as follows. This protein is a component of the leucine, isoleucine, valine, (threonine) transport system, which is one of the two periplasmic binding protein-dependent transport systems of the high-affinity transport of the branched-chain amino acids. The chain is Leu/Ile/Val-binding protein (livJ) from Escherichia coli O157:H7.